The chain runs to 583 residues: Cationic amino acid transporter 6, chloroplastic (583 aa).

A chloroplast-targeting transit peptide spans 1 to 50; it reads MEVQSSSNNGGHSSFSSLRVYLNSLSATPSRLSRRAISVSTSSDEMSRVR. Transmembrane regions (helical) follow at residues 63–83, 91–111, 132–152, 186–206, 216–236, 255–275, 294–314, 347–367, 397–417, 418–438, 450–470, 481–501, 509–529, and 541–561; these read WYDL…FVTT, AGPS…LSAF, ITFG…DYVM, GFNE…VIIC, NMIM…MGFI, FFPF…LSYI, IPVG…LMAV, VVGI…MLGQ, ASTF…LNVL, LNLV…ALIF, WPTL…TLIW, FMLG…QCVV, LWGV…NIFL, and FGFF…HASS.

Belongs to the amino acid-polyamine-organocation (APC) superfamily. Cationic amino acid transporter (CAT) (TC 2.A.3.3) family. As to expression, expressed in roots, stems, flowers, and leaves.

It localises to the plastid. Its subcellular location is the chloroplast membrane. Functionally, permease involved in the transport of the cationic neutral or acidic amino acids. The polypeptide is Cationic amino acid transporter 6, chloroplastic (CAT6) (Arabidopsis thaliana (Mouse-ear cress)).